We begin with the raw amino-acid sequence, 443 residues long: D(2) dopamine receptor (443 aa).

Topologically, residues Met1–Tyr37 are extracellular. Asn5, Asn17, and Asn23 each carry an N-linked (GlcNAc...) asparagine glycan. The chain crosses the membrane as a helical span at residues Ala38–Ser60. Residues Arg61–Asn70 lie on the Cytoplasmic side of the membrane. Residues Tyr71–Tyr93 form a helical membrane-spanning segment. Residues Leu94–Asp108 lie on the Extracellular side of the membrane. Cys107 and Cys182 are joined by a disulfide. The helical transmembrane segment at Ile109–Ile130 threads the bilayer. The Cytoplasmic portion of the chain corresponds to Asp131–Arg151. Residues Val152 to Phe172 traverse the membrane as a helical segment. Residues Gly173–Ala188 are Extracellular-facing. Residues Phe189–Tyr213 traverse the membrane as a helical segment. Residues Lys211–Gln373 are interaction with PPP1R9B. The Cytoplasmic portion of the chain corresponds to Ile214 to Gln373. The tract at residues Met281 to Lys332 is disordered. Basic and acidic residues predominate over residues Ala323 to Lys332. A helical membrane pass occupies residues Met374–Leu395. Residues Asn396–Ser409 are Extracellular-facing. Cysteines 399 and 401 form a disulfide. Residues Ala410–Ile431 form a helical membrane-spanning segment. Over Glu432–Cys443 the chain is Cytoplasmic. Cys443 carries the S-palmitoyl cysteine lipid modification.

This sequence belongs to the G-protein coupled receptor 1 family. Forms homo- and heterooligomers with DRD4. The interaction with DRD4 may modulate agonist-induced downstream signaling. Interacts with CADPS and CADPS2. Interacts with GPRASP1, PPP1R9B and CLIC6. Interacts with ARRB2. Interacts with HTR2A. Interacts with GNAI2 isoform sGi2, the interaction allows the creation of an intracellular pool of DRD2 that can be released to cell surface upon agonist stimulation. Interacts with DRD1. Interacts with KCNA2. Palmitoylated. Palmitoylation which is required for proper localization to the plasma membrane and stability of the receptor could be carried on by ZDHHC4, ZDHHC3 and ZDHHC8. Expressed in the anterior pituitary gland.

Its subcellular location is the cell membrane. It localises to the golgi apparatus membrane. Dopamine receptor whose activity is mediated by G proteins which inhibit adenylyl cyclase. Positively regulates postnatal regression of retinal hyaloid vessels via suppression of VEGFR2/KDR activity, downstream of OPN5. In Homo sapiens (Human), this protein is D(2) dopamine receptor (DRD2).